Reading from the N-terminus, the 190-residue chain is Threonylcarbamoyl-AMP synthase (190 aa).

One can recognise a YrdC-like domain in the interval 7–190 (TGSIAAAVDL…ALTGELFRQG (184 aa)).

It belongs to the SUA5 family. TsaC subfamily.

It is found in the cytoplasm. It carries out the reaction L-threonine + hydrogencarbonate + ATP = L-threonylcarbamoyladenylate + diphosphate + H2O. Its function is as follows. Required for the formation of a threonylcarbamoyl group on adenosine at position 37 (t(6)A37) in tRNAs that read codons beginning with adenine. Catalyzes the conversion of L-threonine, HCO(3)(-)/CO(2) and ATP to give threonylcarbamoyl-AMP (TC-AMP) as the acyladenylate intermediate, with the release of diphosphate. The chain is Threonylcarbamoyl-AMP synthase from Salmonella choleraesuis (strain SC-B67).